The chain runs to 361 residues: Probable pectinesterase 49 (361 aa).

The first 22 residues, 1 to 22, serve as a signal peptide directing secretion; that stretch reads MGYISLALVALLVFFASPVVLA. An N-linked (GlcNAc...) asparagine glycan is attached at Asn128. Residue Gln174 coordinates substrate. Asp197 acts as the Proton donor in catalysis. Asp218 acts as the Nucleophile in catalysis. Arg275 and Trp277 together coordinate substrate.

This sequence belongs to the pectinesterase family. In terms of tissue distribution, expressed in flower buds.

It is found in the secreted. The protein resides in the cell wall. It carries out the reaction [(1-&gt;4)-alpha-D-galacturonosyl methyl ester](n) + n H2O = [(1-&gt;4)-alpha-D-galacturonosyl](n) + n methanol + n H(+). It functions in the pathway glycan metabolism; pectin degradation; 2-dehydro-3-deoxy-D-gluconate from pectin: step 1/5. Functionally, acts in the modification of cell walls via demethylesterification of cell wall pectin. This Arabidopsis thaliana (Mouse-ear cress) protein is Probable pectinesterase 49 (PME49).